The sequence spans 243 residues: 4-hydroxy-tetrahydrodipicolinate reductase (243 aa).

NAD(+)-binding positions include Gly9 to Met14, Gly78 to Ser80, and Ala104 to Phe107. His134 serves as the catalytic Proton donor/acceptor. (S)-2,3,4,5-tetrahydrodipicolinate is bound at residue His135. The active-site Proton donor is the Lys138. Position 144 to 145 (Gly144 to Thr145) interacts with (S)-2,3,4,5-tetrahydrodipicolinate.

This sequence belongs to the DapB family.

The protein localises to the cytoplasm. It carries out the reaction (S)-2,3,4,5-tetrahydrodipicolinate + NAD(+) + H2O = (2S,4S)-4-hydroxy-2,3,4,5-tetrahydrodipicolinate + NADH + H(+). The enzyme catalyses (S)-2,3,4,5-tetrahydrodipicolinate + NADP(+) + H2O = (2S,4S)-4-hydroxy-2,3,4,5-tetrahydrodipicolinate + NADPH + H(+). The protein operates within amino-acid biosynthesis; L-lysine biosynthesis via DAP pathway; (S)-tetrahydrodipicolinate from L-aspartate: step 4/4. In terms of biological role, catalyzes the conversion of 4-hydroxy-tetrahydrodipicolinate (HTPA) to tetrahydrodipicolinate. The chain is 4-hydroxy-tetrahydrodipicolinate reductase from Legionella pneumophila (strain Lens).